A 275-amino-acid polypeptide reads, in one-letter code: Exosome complex component RRP40 (275 aa).

N-acetylalanine is present on Ala2. A Glycyl lysine isopeptide (Lys-Gly) (interchain with G-Cter in SUMO2) cross-link involves residue Lys151.

Belongs to the RRP40 family. Component of the RNA exosome core complex (Exo-9), composed of EXOSC1, EXOSC2, EXOSC3, EXOSC4, EXOSC5, EXOSC6, EXOSC7, EXOSC8 and EXOSC9; within the complex interacts with EXOSC5 and EXOSC9. The catalytically inactive RNA exosome core complex (Exo-9) associates with the catalytic subunit EXOSC10/RRP6. Exo-9 may associate with DIS3 to form the nucleolar exosome complex, or DIS3L to form the cytoplasmic exosome complex. Exo-9 is formed by a hexameric base ring consisting of the heterodimers EXOSC4-EXOSC9, EXOSC5-EXOSC8 and EXOSC6-EXOSC7, and a cap ring consisting of EXOSC1, EXOSC2 and EXOSC3. The RNA exosome complex associates with cofactors C1D/RRP47, MPHOSPH6/MPP6 and MTREX/MTR4. Interacts with MPHOSPH6/MPP6; the interaction is direct. Interacts with GTPBP1. Interacts with ZC3HAV1. Interacts with DDX17 only in the presence of ZC3HAV1 in an RNA-independent manner. Interacts with DHX36; this interaction occurs in a RNase-insensitive manner. Interacts with HBS1L isoform 2.

The protein localises to the cytoplasm. The protein resides in the nucleus. It is found in the nucleolus. Its function is as follows. Non-catalytic component of the RNA exosome complex which has 3'-&gt;5' exoribonuclease activity and participates in a multitude of cellular RNA processing and degradation events. In the nucleus, the RNA exosome complex is involved in proper maturation of stable RNA species such as rRNA, snRNA and snoRNA, in the elimination of RNA processing by-products and non-coding 'pervasive' transcripts, such as antisense RNA species and promoter-upstream transcripts (PROMPTs), and of mRNAs with processing defects, thereby limiting or excluding their export to the cytoplasm. The RNA exosome may be involved in Ig class switch recombination (CSR) and/or Ig variable region somatic hypermutation (SHM) by targeting AICDA deamination activity to transcribed dsDNA substrates. In the cytoplasm, the RNA exosome complex is involved in general mRNA turnover and specifically degrades inherently unstable mRNAs containing AU-rich elements (AREs) within their 3' untranslated regions, and in RNA surveillance pathways, preventing translation of aberrant mRNAs. It seems to be involved in degradation of histone mRNA. The catalytic inactive RNA exosome core complex of 9 subunits (Exo-9) is proposed to play a pivotal role in the binding and presentation of RNA for ribonucleolysis, and to serve as a scaffold for the association with catalytic subunits and accessory proteins or complexes. EXOSC3 as peripheral part of the Exo-9 complex stabilizes the hexameric ring of RNase PH-domain subunits through contacts with EXOSC9 and EXOSC5. This Bos taurus (Bovine) protein is Exosome complex component RRP40 (EXOSC3).